Reading from the N-terminus, the 358-residue chain is Dynein axonemal assembly factor 10 (358 aa).

WD repeat units follow at residues 64–106 (EKPK…TPVY), 116–155 (NCID…TPVA), 163–206 (ETKR…VRWE), 208–250 (NIKN…PSKG), 258–298 (AHKS…QRSR), and 320–358 (LSTQ…LNKL).

In terms of assembly, interacts with PIH1D1; the interaction associates DNAAF10 with the R2TP complex. Interacts with several dynein axonemal assembly factors.

Its subcellular location is the dynein axonemal particle. In terms of biological role, key assembly factor specifically required for the stability of axonemal dynein heavy chains in cytoplasm. The polypeptide is Dynein axonemal assembly factor 10 (dnaaf10) (Xenopus tropicalis (Western clawed frog)).